Here is an 80-residue protein sequence, read N- to C-terminus: Metallothionein-like protein type 2 (80 aa).

Belongs to the metallothionein superfamily. Type 15 family.

Its function is as follows. Metallothioneins have a high content of cysteine residues that bind various heavy metals. This is Metallothionein-like protein type 2 from Brassica campestris (Field mustard).